Consider the following 275-residue polypeptide: ATP synthase subunit delta (275 aa).

Belongs to the ATPase delta chain family. As to quaternary structure, F-type ATPases have 2 components, F(1) - the catalytic core - and F(0) - the membrane proton channel. F(1) has five subunits: alpha(3), beta(3), gamma(1), delta(1), epsilon(1). F(0) has three main subunits: a(1), b(2) and c(10-14). The alpha and beta chains form an alternating ring which encloses part of the gamma chain. F(1) is attached to F(0) by a central stalk formed by the gamma and epsilon chains, while a peripheral stalk is formed by the delta and b chains.

It is found in the cell membrane. In terms of biological role, f(1)F(0) ATP synthase produces ATP from ADP in the presence of a proton or sodium gradient. F-type ATPases consist of two structural domains, F(1) containing the extramembraneous catalytic core and F(0) containing the membrane proton channel, linked together by a central stalk and a peripheral stalk. During catalysis, ATP synthesis in the catalytic domain of F(1) is coupled via a rotary mechanism of the central stalk subunits to proton translocation. This protein is part of the stalk that links CF(0) to CF(1). It either transmits conformational changes from CF(0) to CF(1) or is implicated in proton conduction. The protein is ATP synthase subunit delta of Bifidobacterium adolescentis (strain ATCC 15703 / DSM 20083 / NCTC 11814 / E194a).